A 1247-amino-acid chain; its full sequence is Structural polyprotein (1247 aa).

The disordered stretch occupies residues 52 to 103 (ALRTVPQKPRRTRKTKKQKQVKQEQQSTRNQKKKAPKQKQTQKKKRPGRRER). Basic residues-rich tracts occupy residues 59–71 (KPRRTRKTKKQKQ) and 81–100 (NQKKKAPKQKQTQKKKRPGR). The interval 86–99 (APKQKQTQKKKRPG) is ribosome-binding. Residues C112 and C127 are joined by a disulfide bond. The region spanning 112-260 (CIFEVKHEGK…KITPEGSVEW (149 aa)) is the Peptidase S3 domain. The Charge relay system role is filled by H138. An interaction with spike glycoprotein E2 region spans residues 154-159 (KRSSKY). Active-site charge relay system residues include D160 and S212. The interval 261–273 (SLALPVMCLLANT) is functions as an uncleaved signal peptide for the precursor of protein E3/E2. Disulfide bonds link C268–C277, C282–C286, C285–C317, C343–C449, C346–C352, C415–C429, C477–C590, C525–C549, and C527–C544. The N-linked (GlcNAc...) asparagine; by host glycan is linked to N272. At 325–691 (NARENFNVYK…YYYELYPTTT (367 aa)) the chain is on the extracellular side. N587 carries an N-linked (GlcNAc...) asparagine; by host glycan. Residues 692 to 712 (IAVLAAASIVVASLVSLSLGM) traverse the membrane as a helical segment. Residues 713-747 (CICARRRCITPYELTPGATIPFLLGVLCCVKTAKA) lie on the Cytoplasmic side of the membrane. The interval 715-719 (CARRR) is interaction with the capsid protein. Residues C720, C740, and C741 are each lipidated (S-palmitoyl cysteine; by host). The segment at 720–740 (CITPYELTPGATIPFLLGVLC) is transient transmembrane before p62-6K protein processing. A disulfide bridge links C720 with C741. At 748–762 (ASYYEAATYLWNEQQ) the chain is on the extracellular side. A helical membrane pass occupies residues 763–783 (PLFWLQLLIPLSAAIVACNCL). Residues 784-787 (KLLP) lie on the Cytoplasmic side of the membrane. The helical transmembrane segment at 788–808 (CCCKTLTFLAVMSIGARTVSA) threads the bilayer. Topologically, residues 809 to 1223 (YEHATVIPNT…AMSWVQKITG (415 aa)) are extracellular. 4 disulfides stabilise this stretch: C857-C922, C870-C902, C871-C904, and C876-C886. The E1 fusion peptide loop stretch occupies residues 892–909 (VYPFMWGGAYCFCDAENT). N-linked (GlcNAc...) asparagine; by host glycosylation is found at N949 and N1078. Intrachain disulfides connect C1067/C1079, C1109/C1184, C1114/C1188, and C1136/C1178. The helical transmembrane segment at 1224–1244 (GVGLVVAIAALILIIVLCVSF) threads the bilayer. A lipid anchor (S-palmitoyl cysteine; by host) is attached at C1241. The Cytoplasmic segment spans residues 1245-1247 (SRH).

Homodimer. Homomultimer. Interacts with host karyopherin KPNA4; this interaction allows the nuclear import of the viral capsid protein. Interacts with spike glycoprotein E2. Interacts with host IRAK1; the interaction leads to inhibition of IRAK1-dependent signaling. In terms of assembly, the precursor of protein E3/E2 and E1 form a heterodimer shortly after synthesis. As to quaternary structure, the precursor of protein E3/E2 and E1 form a heterodimer shortly after synthesis. Processing of the precursor of protein E3/E2 into E2 and E3 results in a heterodimer of the spike glycoproteins E2 and E1. Spike at virion surface are constituted of three E2-E1 heterodimers. After target cell attachment and endocytosis, E1 change conformation to form homotrimers. Interacts with 6K protein. Interacts with spike glycoprotein E1. Processing of the precursor of protein E3/E2 into E2 and E3 results in a heterodimer of the spike glycoproteins E2 and E1. Spike at virion surface are constituted of a trimer of E2-E1 heterodimers. Interacts with 6K protein. Interacts with host MXRA8; this interaction mediates virus entry. In terms of assembly, oligomer. Interacts with spike glycoprotein E1. Interacts with spike glycoprotein E2. Structural polyprotein: Specific enzymatic cleavages in vivo yield mature proteins. Capsid protein is auto-cleaved during polyprotein translation, unmasking a signal peptide at the N-terminus of the precursor of E3/E2. The remaining polyprotein is then targeted to the host endoplasmic reticulum, where host signal peptidase cleaves it into pE2, 6K and E1 proteins. pE2 is further processed to mature E3 and E2 by host furin in trans-Golgi vesicle. In terms of processing, palmitoylated via thioester bonds. These palmitoylations may induce disruption of the C-terminus transmembrane. This would result in the reorientation of E2 C-terminus from lumenal to cytoplasmic side. Post-translationally, N-glycosylated. Palmitoylated via thioester bonds.

Its subcellular location is the virion. It localises to the host cytoplasm. The protein localises to the host cell membrane. It is found in the virion membrane. The protein resides in the host Golgi apparatus. Its subcellular location is the host trans-Golgi network. It localises to the host endoplasmic reticulum. The enzyme catalyses Autocatalytic release of the core protein from the N-terminus of the togavirus structural polyprotein by hydrolysis of a -Trp-|-Ser- bond.. Possesses a protease activity that results in its autocatalytic cleavage from the nascent structural protein. Following its self-cleavage, the capsid protein transiently associates with ribosomes, and within several minutes the protein binds to viral RNA and rapidly assembles into icosahedric core particles. The resulting nucleocapsid eventually associates with the cytoplasmic domain of the spike glycoprotein E2 at the cell membrane, leading to budding and formation of mature virions. In case of infection, new virions attach to target cells and after clathrin-mediated endocytosis their membrane fuses with the host endosomal membrane. This leads to the release of the nucleocapsid into the cytoplasm, followed by an uncoating event necessary for the genomic RNA to become accessible. The uncoating might be triggered by the interaction of capsid proteins with ribosomes. Binding of ribosomes would release the genomic RNA since the same region is genomic RNA-binding and ribosome-binding. In terms of biological role, provides the signal sequence for the translocation of the precursor of protein E3/E2 to the host endoplasmic reticulum. Mediates pH protection of spike glycoprotein E1 during the transport via the secretory pathway. Functionally, plays a role in viral attachment to target host cell, by binding to the cell receptor MXRA8. Synthesized as a p62 precursor which is processed by furin at the cell membrane just before virion budding, giving rise to E2-E1 heterodimer. The p62-E1 heterodimer is stable, whereas E2-E1 is unstable and dissociate at low pH. p62 is processed at the last step, presumably to avoid E1 fusion activation before its final export to cell surface. E2 C-terminus contains a transitory transmembrane that would be disrupted by palmitoylation, resulting in reorientation of the C-terminal tail from lumenal to cytoplasmic side. This step is critical since E2 C-terminus is involved in budding by interacting with capsid proteins. This release of E2 C-terminus in cytoplasm occurs lately in protein export, and precludes premature assembly of particles at the endoplasmic reticulum membrane. Its function is as follows. Acts as a viroporin that participates in virus glycoprotein processing and transport to the plasma membrane, cell permeabilization and budding of viral particles. Disrupts the calcium homeostasis of the cell, probably at the endoplasmic reticulum level. This leads to cytoplasmic calcium elevation. Because of its lipophilic properties, the 6K protein is postulated to influence the selection of lipids that interact with the transmembrane domains of the glycoproteins, which, in turn, affects the deformability of the bilayer required for the extreme curvature that occurs as budding proceeds. Present in low amount in virions, about 3% compared to viral glycoproteins. Class II viral fusion protein. Fusion activity is inactive as long as E1 is bound to E2 in mature virion. After virus attachment to target cell via host MXRA8 and endocytosis, acidification of the endosome induce dissociation of E1/E2 heterodimer and concomitant trimerization of the E1 subunits. This E1 trimer is fusion active, and promotes release of viral nucleocapsid in cytoplasm after endosome and viral membrane fusion. Efficient fusion requires the presence of cholesterol and sphingolipid in the target membrane. The protein is Structural polyprotein of O'nyong-nyong virus (strain SG650) (ONNV).